The sequence spans 962 residues: Phenylalanine--tRNA ligase beta subunit (962 aa).

In terms of domain architecture, tRNA-binding spans 85–201 (TIRWCKVRVC…AEVFQGDELS (117 aa)). Positions 456-538 (TQQSPILLST…RVIGFNRIPS (83 aa)) constitute a B5 domain. Residues Asp-516, Asp-522, Glu-525, and Glu-526 each coordinate Mg(2+). The tract at residues 621–675 (PDSTHNPDSGSDPIIPTGVTRITEPGSSGVSGPGNVGVKEKCSADTSIEHAPTTR) is insert. The FDX-ACB domain maps to 870–961 (PTSPAATQHL…ASSKFGAIMR (92 aa)).

Belongs to the phenylalanyl-tRNA synthetase beta subunit family. Type 1 subfamily. As to quaternary structure, tetramer of two alpha and two beta subunits. It depends on Mg(2+) as a cofactor.

It is found in the cytoplasm. It carries out the reaction tRNA(Phe) + L-phenylalanine + ATP = L-phenylalanyl-tRNA(Phe) + AMP + diphosphate + H(+). The protein is Phenylalanine--tRNA ligase beta subunit of Tropheryma whipplei (strain Twist) (Whipple's bacillus).